The chain runs to 133 residues: Ribonuclease VapC17 (133 aa).

Mg(2+) is bound by residues D7 and D93. The 89-residue stretch at 30 to 118 (AICDIGELEW…HHDRDYKRIA (89 aa)) folds into the PINc domain.

The protein belongs to the PINc/VapC protein family. Mg(2+) serves as cofactor.

In terms of biological role, toxic component of a type II toxin-antitoxin (TA) system. An RNase. The cognate antitoxin is VapB17. The protein is Ribonuclease VapC17 of Mycobacterium tuberculosis (strain CDC 1551 / Oshkosh).